Reading from the N-terminus, the 281-residue chain is Shikimate dehydrogenase (NADP(+)) (281 aa).

Residues 14–16 and Thr61 each bind shikimate; that span reads SRS. Lys65 functions as the Proton acceptor in the catalytic mechanism. The shikimate site is built by Asn86 and Asp101. NADP(+) is bound by residues 127-131, 151-156, and Val216; these read GAGGA and NRTLAR. Tyr218 contacts shikimate. NADP(+) is bound at residue Gly239.

This sequence belongs to the shikimate dehydrogenase family. Homodimer.

It carries out the reaction shikimate + NADP(+) = 3-dehydroshikimate + NADPH + H(+). It participates in metabolic intermediate biosynthesis; chorismate biosynthesis; chorismate from D-erythrose 4-phosphate and phosphoenolpyruvate: step 4/7. Its function is as follows. Involved in the biosynthesis of the chorismate, which leads to the biosynthesis of aromatic amino acids. Catalyzes the reversible NADPH linked reduction of 3-dehydroshikimate (DHSA) to yield shikimate (SA). The protein is Shikimate dehydrogenase (NADP(+)) of Azorhizobium caulinodans (strain ATCC 43989 / DSM 5975 / JCM 20966 / LMG 6465 / NBRC 14845 / NCIMB 13405 / ORS 571).